Reading from the N-terminus, the 152-residue chain is Natriuretic peptides A (152 aa).

Residues 1–24 (MGSSAITTSFLLFVAFQLPGQTGA) form the signal peptide. 2 consecutive propeptides follow at residues 25–122 (NPVY…TAPR) and 92–102 (EMGAPSDGDPG). The segment at 50 to 108 (MPLEDEAVPSQVLSEQNEEAGAPLSPLSEVPPWDGGRSTQPREMGAPSDGDPGNPPRSV) is disordered. Ser128 is modified (phosphoserine). Cys129 and Cys145 are disulfide-bonded. The tract at residues 146 to 150 (NSFRY) is important for degradation of atrial natriuretic peptide by IDE.

This sequence belongs to the natriuretic peptide family. Homodimer; disulfide-linked antiparallel dimer. The precursor molecule is proteolytically cleaved by CORIN at Arg-122 to produce the atrial natriuretic peptide. Undergoes further proteolytic cleavage by unknown proteases to give rise to long-acting natriuretic peptide, vessel dilator and kaliuretic peptide. Additional processing gives rise to the auriculin and atriopeptin peptides. In the kidneys, alternative processing by an unknown protease results in the peptide urodilatin. In terms of processing, cleavage by MME initiates degradation of the factor and thereby regulates its activity. Degradation by IDE results in reduced activation of NPR1 (in vitro). During IDE degradation, the resulting products can temporarily stimulate NPR2 to produce cGMP, before the fragments are completely degraded and inactivated by IDE (in vitro). Post-translationally, degraded by IDE. Phosphorylation on Ser-128 decreases vasorelaxant activity.

The protein localises to the secreted. Its subcellular location is the perikaryon. It localises to the cell projection. In terms of biological role, hormone that plays a key role in mediating cardio-renal homeostasis, and is involved in vascular remodeling and regulating energy metabolism. Acts by specifically binding and stimulating NPR1 to produce cGMP, which in turn activates effector proteins, such as PRKG1, that drive various biological responses. Regulates vasodilation, natriuresis, diuresis and aldosterone synthesis and is therefore essential for regulating blood pressure, controlling the extracellular fluid volume and maintaining the fluid-electrolyte balance. Also involved in inhibiting cardiac remodeling and cardiac hypertrophy by inducing cardiomyocyte apoptosis and attenuating the growth of cardiomyocytes and fibroblasts. Plays a role in female pregnancy by promoting trophoblast invasion and spiral artery remodeling in uterus, and thus prevents pregnancy-induced hypertension. In adipose tissue, acts in various cGMP- and PKG-dependent pathways to regulate lipid metabolism and energy homeostasis. This includes up-regulating lipid metabolism and mitochondrial oxygen utilization by activating the AMP-activated protein kinase (AMPK), and increasing energy expenditure by acting via MAPK11 to promote the UCP1-dependent thermogenesis of brown adipose tissue. Binds the clearance receptor NPR3 which removes the hormone from circulation. Functionally, may have a role in cardio-renal homeostasis through regulation of natriuresis, diuresis, vasodilation, and inhibiting aldosterone synthesis. In vitro, promotes the production of cGMP and induces vasodilation. May promote natriuresis, at least in part, by enhancing prostaglandin E2 synthesis resulting in the inhibition of renal Na+-K+-ATPase. However reports on the involvement of this peptide in mammal blood volume and blood pressure homeostasis are conflicting; according to a report, in vivo it is not sufficient to activate cGMP and does not inhibit collecting duct transport nor effect diuresis and natriuresis. Appears to bind to specific receptors that are distinct from the receptors bound by atrial natriuretic peptide and vessel dilator. Possibly enhances protein excretion in urine by decreasing proximal tubular protein reabsorption. Its function is as follows. May have a role in cardio-renal homeostasis through regulation of natriuresis, diuresis, and vasodilation. In vitro, promotes the production of cGMP and induces vasodilation. May promote natriuresis, at least in part, by enhancing prostaglandin E2 synthesis resulting in the inhibition of renal Na+-K+-ATPase. However reports on the involvement of this peptide in mammal blood volume and blood pressure homeostasis are conflicting; according to a report it is not sufficient to activate cGMP and does not inhibit collecting duct transport nor effect diuresis and natriuresis. Appears to bind to specific receptors that are distinct from the receptors bound by the atrial natriuretic and long-acting natriuretic peptides. Possibly functions in protein excretion in urine by maintaining the integrity of the proximal tubules and enhancing protein excretion by decreasing proximal tubular protein reabsorption. May have a role in cardio-renal homeostasis through regulation of diuresis and inhibiting aldosterone synthesis. In vitro, promotes the production of cGMP and induces vasodilation. May promote natriuresis, at least in part, by enhancing prostaglandin E2 synthesis resulting in the inhibition of renal Na+-K+-ATPase. May have a role in potassium excretion but not sodium excretion (natriuresis). Possibly enhances protein excretion in urine by decreasing proximal tubular protein reabsorption. In terms of biological role, hormone produced in the kidneys that appears to be important for maintaining cardio-renal homeostasis. Mediates vasodilation, natriuresis and diuresis primarily in the renal system, in order to maintain the extracellular fluid volume and control the fluid-electrolyte balance. Specifically binds and stimulates cGMP production by renal transmembrane receptors, likely NPR1. Urodilatin not ANP, may be the natriuretic peptide responsible for the regulation of sodium and water homeostasis in the kidney. Functionally, may have a role in cardio-renal homeostasis through regulation of natriuresis and vasodilation. In vivo promotes natriuresis and in vitro, vasodilates renal artery strips. Its function is as follows. May have a role in cardio-renal homeostasis through regulation of regulation of natriuresis and vasodilation. In vivo promotes natriuresis. In vitro, vasodilates intestinal smooth muscle but not smooth muscle strips. May have a role in cardio-renal homeostasis through regulation of natriuresis and vasodilation. In vivo promotes natriuresis. In vitro, selectively vasodilates intestinal and vascular smooth muscle strips. In terms of biological role, may have a role in cardio-renal homeostasis through regulation of natriuresis and vasodilation. In vivo promotes natriuresis. In vitro, selectively vasodilates intestinal smooth muscle but not vascular smooth muscle strips. The sequence is that of Natriuretic peptides A (NPPA) from Ovis aries (Sheep).